A 94-amino-acid chain; its full sequence is Large ribosomal subunit protein bL27 (94 aa).

Residues 1–9 (MLELNLQLF) constitute a propeptide that is removed on maturation. The tract at residues 12–33 (KKGGGSTSNGRDSQAKRLGAKA) is disordered.

This sequence belongs to the bacterial ribosomal protein bL27 family. In terms of processing, the N-terminus is cleaved by ribosomal processing cysteine protease Prp.

This is Large ribosomal subunit protein bL27 from Lactococcus lactis subsp. lactis (strain IL1403) (Streptococcus lactis).